The chain runs to 713 residues: Protein-glucosylgalactosylhydroxylysine glucosidase (713 aa).

Positions 1–21 (MIINSQEYLQPPQWWNERVEA) are cleaved as a signal peptide. N-linked (GlcNAc...) asparagine glycosylation is found at asparagine 104, asparagine 160, asparagine 171, asparagine 186, and asparagine 283. 317–318 (WD) provides a ligand contact to substrate. Asparagine 361 carries N-linked (GlcNAc...) asparagine glycosylation. Catalysis depends on glutamate 451, which acts as the Proton donor. Asparagine 457 and asparagine 481 each carry an N-linked (GlcNAc...) asparagine glycan. Position 521 to 522 (521 to 522 (KQ)) interacts with substrate. 3 N-linked (GlcNAc...) asparagine glycosylation sites follow: asparagine 535, asparagine 576, and asparagine 662.

It belongs to the glycosyl hydrolase 65 family.

The protein resides in the secreted. The enzyme catalyses (5R)-5-O-[alpha-D-glucosyl-(1-&gt;2)-beta-D-galactosyl]-5-hydroxy-L-lysyl-[collagen] + H2O = (5R)-5-O-(beta-D-galactosyl)-5-hydroxy-L-lysyl-[collagen] + D-glucose. In terms of biological role, catalyzes the hydrolysis of glucose from the disaccharide unit linked to hydroxylysine residues of collagen and collagen-like proteins. This chain is Protein-glucosylgalactosylhydroxylysine glucosidase, found in Dictyostelium discoideum (Social amoeba).